Here is a 630-residue protein sequence, read N- to C-terminus: Probable potassium transport system protein Kup 1 (630 aa).

Helical transmembrane passes span 15 to 35 (LLAM…TSPL), 58 to 78 (LISL…VLFL), 104 to 124 (TAIL…DAMI), 142 to 162 (PALS…LFAV), 173 to 193 (FFGP…FMHI), 208 to 228 (AVAF…AVFL), 252 to 272 (WFTV…AFVL), 290 to 310 (ALLP…QAVI), 342 to 362 (IYLP…VFIF), 368 to 388 (LATA…VLAF), 399 to 419 (AWWA…FLGA), and 424 to 444 (IHDG…IMWT).

It belongs to the HAK/KUP transporter (TC 2.A.72) family.

It localises to the cell inner membrane. It catalyses the reaction K(+)(in) + H(+)(in) = K(+)(out) + H(+)(out). Its function is as follows. Transport of potassium into the cell. Likely operates as a K(+):H(+) symporter. This Sinorhizobium medicae (strain WSM419) (Ensifer medicae) protein is Probable potassium transport system protein Kup 1.